Here is a 612-residue protein sequence, read N- to C-terminus: MTDKEKRLERQSRIRNFSIIAHIDHGKSTLADRILEKTSAITQREMKEQLLDSMDLERERGITIKLNSVQLKYKAKDGEEYIFHLIDTPGHVDFTYEVSRSLAACEGAILVVDAAQGIEAQTLANVYLALDNDLEILPVINKIDLPSAEPERVRQEVEDVIGLDASEAVLASAKAGIGIEEILEQIVEKVPAPTGDPEAPLKALIFDSLYDAYRGVVAYIRVVEGTVKPGQKIKMMATGKEFEVTEVGVFTPKATPTNELTVGDVGFLTASIKNVGDTRVGDTITSAANPAEEALPGYRKLNPMVYCGLYPIDTAKYNDLREALEKLELNDSSLQYEAETSQALGFGFRCGFLGMLHMEIIQERIEREFNIDLITTAPSVIYDVYMTDGEKVVVDNPSNMPDPQKIERVEEPYVKATMMVPNDYVGAVMELCQGKRGNFIDMQYLDANRVSIIYDMPLAEIVYEFFDQLKSSTKGYASFDYELIGYKPSKLVKMDIMLNGEKIDALSFIVHRDYAYERGKVIVEKLKELIPRQQFEVPVQAAIGQKIVARSTIKAMRKNVLAKCYGGDISRKRKLLEKQKEGKRRMKQVGSVEVPQEAFMAVLKMDDSPKKQ.

A tr-type G domain is found at 12-194; it reads SRIRNFSIIA…QIVEKVPAPT (183 aa). Residues 24–29 and 141–144 contribute to the GTP site; these read DHGKST and NKID.

It belongs to the TRAFAC class translation factor GTPase superfamily. Classic translation factor GTPase family. LepA subfamily.

Its subcellular location is the cell membrane. The enzyme catalyses GTP + H2O = GDP + phosphate + H(+). Required for accurate and efficient protein synthesis under certain stress conditions. May act as a fidelity factor of the translation reaction, by catalyzing a one-codon backward translocation of tRNAs on improperly translocated ribosomes. Back-translocation proceeds from a post-translocation (POST) complex to a pre-translocation (PRE) complex, thus giving elongation factor G a second chance to translocate the tRNAs correctly. Binds to ribosomes in a GTP-dependent manner. The protein is Elongation factor 4 of Bacillus subtilis (strain 168).